Reading from the N-terminus, the 1170-residue chain is PAN2-PAN3 deadenylation complex catalytic subunit PAN2 (1170 aa).

2 WD repeats span residues 104–144 (ENMK…IIKQ) and 280–319 (NISS…HFTD). Residues 319-458 (DMAIPIELPE…DPNEIESLKP (140 aa)) form a linker region. The tract at residues 399-459 (RRNQVEDTRN…PNEIESLKPE (61 aa)) is disordered. Positions 443–452 (VDQEPEDPNE) are enriched in acidic residues. The USP domain maps to 459 to 846 (EAPPLYRNLE…MPAVLLFQIK (388 aa)). Residues 894 to 1067 (VALDTEFVSL…EDARTALKLY (174 aa)) form the Exonuclease domain. Asp-897, Glu-899, Asp-1006, and Asp-1059 together coordinate a divalent metal cation. The disordered stretch occupies residues 1094 to 1170 (NFKPPRREDR…PSKASSPLPK (77 aa)). Basic and acidic residues predominate over residues 1098–1108 (PRREDREKELQ). Positions 1109 to 1119 (RQSTPPNSTAP) are enriched in polar residues.

Belongs to the peptidase C19 family. PAN2 subfamily. In terms of assembly, forms a heterotrimer with an asymmetric homodimer of the regulatory subunit PAN3 to form the poly(A)-nuclease (PAN) deadenylation complex. The cofactor is a divalent metal cation.

Its subcellular location is the cytoplasm. It catalyses the reaction Exonucleolytic cleavage of poly(A) to 5'-AMP.. Positively regulated by the regulatory subunit PAN3. In terms of biological role, catalytic subunit of the poly(A)-nuclease (PAN) deadenylation complex, one of two cytoplasmic mRNA deadenylases involved in mRNA turnover. PAN specifically shortens poly(A) tails of RNA and the activity is stimulated by poly(A)-binding protein PAB1. PAN deadenylation is followed by rapid degradation of the shortened mRNA tails by the CCR4-NOT complex. Deadenylated mRNAs are then degraded by two alternative mechanisms, namely exosome-mediated 3'-5' exonucleolytic degradation, or deadenylation-dependent mRNA decaping and subsequent 5'-3' exonucleolytic degradation by XRN1. May also be involved in post-transcriptional maturation of mRNA poly(A) tails. The chain is PAN2-PAN3 deadenylation complex catalytic subunit PAN2 from Chaetomium thermophilum (strain DSM 1495 / CBS 144.50 / IMI 039719) (Thermochaetoides thermophila).